We begin with the raw amino-acid sequence, 282 residues long: Phosphatidylglycerol--prolipoprotein diacylglyceryl transferase (282 aa).

Transmembrane regions (helical) follow at residues 19-39 (IGPI…LIGV), 59-79 (LSIW…VLFQ), 90-110 (IIAI…GTLA), and 120-140 (VPFW…QAIG). R141 provides a ligand contact to a 1,2-diacyl-sn-glycero-3-phospho-(1'-sn-glycerol). Transmembrane regions (helical) follow at residues 181-201 (TFLY…TLFF), 212-232 (VGTL…WIEG), and 245-265 (IAQV…AWLY).

This sequence belongs to the Lgt family.

The protein localises to the cell inner membrane. The enzyme catalyses L-cysteinyl-[prolipoprotein] + a 1,2-diacyl-sn-glycero-3-phospho-(1'-sn-glycerol) = an S-1,2-diacyl-sn-glyceryl-L-cysteinyl-[prolipoprotein] + sn-glycerol 1-phosphate + H(+). Its pathway is protein modification; lipoprotein biosynthesis (diacylglyceryl transfer). In terms of biological role, catalyzes the transfer of the diacylglyceryl group from phosphatidylglycerol to the sulfhydryl group of the N-terminal cysteine of a prolipoprotein, the first step in the formation of mature lipoproteins. This Trichormus variabilis (strain ATCC 29413 / PCC 7937) (Anabaena variabilis) protein is Phosphatidylglycerol--prolipoprotein diacylglyceryl transferase.